A 78-amino-acid chain; its full sequence is UPF0349 protein RBAM_029300 (78 aa).

This sequence belongs to the UPF0349 family.

In Bacillus velezensis (strain DSM 23117 / BGSC 10A6 / LMG 26770 / FZB42) (Bacillus amyloliquefaciens subsp. plantarum), this protein is UPF0349 protein RBAM_029300.